We begin with the raw amino-acid sequence, 195 residues long: FMN-dependent NADH:quinone oxidoreductase 2 (195 aa).

Residues 16–18 (SVS) and 85–88 (MWNL) each bind FMN.

Belongs to the azoreductase type 1 family. Homodimer. Requires FMN as cofactor.

The catalysed reaction is 2 a quinone + NADH + H(+) = 2 a 1,4-benzosemiquinone + NAD(+). It carries out the reaction N,N-dimethyl-1,4-phenylenediamine + anthranilate + 2 NAD(+) = 2-(4-dimethylaminophenyl)diazenylbenzoate + 2 NADH + 2 H(+). Quinone reductase that provides resistance to thiol-specific stress caused by electrophilic quinones. Functionally, also exhibits azoreductase activity. Catalyzes the reductive cleavage of the azo bond in aromatic azo compounds to the corresponding amines. The chain is FMN-dependent NADH:quinone oxidoreductase 2 from Photobacterium profundum (strain SS9).